We begin with the raw amino-acid sequence, 106 residues long: UPF0213 protein VPA1222 (106 aa).

One can recognise a GIY-YIG domain in the interval 7–82; it reads QHWSVYLIRN…KQLTKSKKEQ (76 aa).

Belongs to the UPF0213 family.

The protein is UPF0213 protein VPA1222 of Vibrio parahaemolyticus serotype O3:K6 (strain RIMD 2210633).